A 50-amino-acid polypeptide reads, in one-letter code: Photosystem II reaction center protein K (50 aa).

Residues 1 to 13 (MLNLNFTNITVMG) constitute a propeptide that is removed on maturation. A helical transmembrane segment spans residues 25–45 (IVDILPIIPILFFLLAFVWQA).

Belongs to the PsbK family. In terms of assembly, PSII is composed of 1 copy each of membrane proteins PsbA, PsbB, PsbC, PsbD, PsbE, PsbF, PsbH, PsbI, PsbJ, PsbK, PsbL, PsbM, PsbT, PsbY, PsbZ, Psb30/Ycf12, at least 3 peripheral proteins of the oxygen-evolving complex and a large number of cofactors. It forms dimeric complexes.

The protein resides in the plastid. It localises to the chloroplast thylakoid membrane. Its function is as follows. One of the components of the core complex of photosystem II (PSII). PSII is a light-driven water:plastoquinone oxidoreductase that uses light energy to abstract electrons from H(2)O, generating O(2) and a proton gradient subsequently used for ATP formation. It consists of a core antenna complex that captures photons, and an electron transfer chain that converts photonic excitation into a charge separation. This chain is Photosystem II reaction center protein K, found in Euglena myxocylindracea.